We begin with the raw amino-acid sequence, 146 residues long: uncharacterized protein (146 aa).

Positions 119 to 128 (AQADLEHEES) are enriched in basic and acidic residues. The disordered stretch occupies residues 119–146 (AQADLEHEESASIDQDEMVAIETRKTKK).

This is an uncharacterized protein from Schizosaccharomyces pombe (strain 972 / ATCC 24843) (Fission yeast).